The following is a 121-amino-acid chain: Large ribosomal subunit protein uL14c (121 aa).

Belongs to the universal ribosomal protein uL14 family. In terms of assembly, part of the 50S ribosomal subunit.

Its subcellular location is the plastid. It is found in the chloroplast. In terms of biological role, binds to 23S rRNA. The polypeptide is Large ribosomal subunit protein uL14c (Trieres chinensis (Marine centric diatom)).